We begin with the raw amino-acid sequence, 158 residues long: Transcription elongation factor GreA (158 aa).

The protein belongs to the GreA/GreB family.

Necessary for efficient RNA polymerase transcription elongation past template-encoded arresting sites. The arresting sites in DNA have the property of trapping a certain fraction of elongating RNA polymerases that pass through, resulting in locked ternary complexes. Cleavage of the nascent transcript by cleavage factors such as GreA or GreB allows the resumption of elongation from the new 3'terminus. GreA releases sequences of 2 to 3 nucleotides. This is Transcription elongation factor GreA from Pelagibacter ubique (strain HTCC1062).